Here is a 207-residue protein sequence, read N- to C-terminus: Large ribosomal subunit protein uL4 (207 aa).

The interval 48 to 87 (THAVKNRSAVSGGGKKPWRQKGTGRARQGSIRSPQFRGGG) is disordered.

This sequence belongs to the universal ribosomal protein uL4 family. As to quaternary structure, part of the 50S ribosomal subunit.

In terms of biological role, one of the primary rRNA binding proteins, this protein initially binds near the 5'-end of the 23S rRNA. It is important during the early stages of 50S assembly. It makes multiple contacts with different domains of the 23S rRNA in the assembled 50S subunit and ribosome. Its function is as follows. Forms part of the polypeptide exit tunnel. This is Large ribosomal subunit protein uL4 from Limosilactobacillus reuteri subsp. reuteri (strain JCM 1112) (Lactobacillus reuteri).